The sequence spans 262 residues: Adenosylcobinamide-GDP ribazoletransferase (262 aa).

6 helical membrane-spanning segments follow: residues 43–63 (YFGLVGLLVGLLSAIVFWLTQ), 66–86 (LPAGVSVLLSMVTGVLLTGGF), 120–140 (GALALMLVLMLKWQLLVELAL), 146–166 (AGSAMIVAHTVSRVVAASLIF), 191–211 (LFILIASGVLVLLVLKGIAAL), and 242–262 (AAQQICEIVCYFVLLVVGSIL).

The protein belongs to the CobS family. It depends on Mg(2+) as a cofactor.

The protein localises to the cell inner membrane. It carries out the reaction alpha-ribazole + adenosylcob(III)inamide-GDP = adenosylcob(III)alamin + GMP + H(+). It catalyses the reaction alpha-ribazole 5'-phosphate + adenosylcob(III)inamide-GDP = adenosylcob(III)alamin 5'-phosphate + GMP + H(+). Its pathway is cofactor biosynthesis; adenosylcobalamin biosynthesis; adenosylcobalamin from cob(II)yrinate a,c-diamide: step 7/7. In terms of biological role, joins adenosylcobinamide-GDP and alpha-ribazole to generate adenosylcobalamin (Ado-cobalamin). Also synthesizes adenosylcobalamin 5'-phosphate from adenosylcobinamide-GDP and alpha-ribazole 5'-phosphate. This Shewanella sp. (strain ANA-3) protein is Adenosylcobinamide-GDP ribazoletransferase.